A 368-amino-acid polypeptide reads, in one-letter code: Nuclease EXOG, mitochondrial (368 aa).

A mitochondrion-targeting transit peptide spans 1–41 (MAAKSFASRLRDSRRFLNGFLAGAVVGAAGAGLTALQFFRR). H140 (proton acceptor) is an active-site residue. Residue N171 coordinates a divalent metal cation.

The protein belongs to the DNA/RNA non-specific endonuclease family. Homodimer. Requires a divalent metal cation as cofactor.

It localises to the mitochondrion inner membrane. Functionally, endo/exonuclease with nicking activity towards supercoiled DNA, a preference for single-stranded DNA and 5'-3' exonuclease activity. The protein is Nuclease EXOG, mitochondrial (Exog) of Mus musculus (Mouse).